The primary structure comprises 264 residues: Enhancer of mRNA-decapping protein 1 (264 aa).

Disordered regions lie at residues 1 to 180 and 193 to 264; these read MLAQ…FSTI and YNNP…LRDY. The segment covering 63–74 has biased composition (basic residues); it reads GKKSTSKPKSKS. Positions 83 to 92 are enriched in polar residues; sequence NFKLTASPSL. Over residues 108–118 the composition is skewed to pro residues; the sequence is PSPPPPPPPST. 3 stretches are compositionally biased toward low complexity: residues 119-134, 161-172, and 208-226; these read QPSTSTSTSPTPRTST, NGKKPNFFNNNN, and NNNNNNSSNNSNNSNNSNS. Residues 248–264 show a composition bias toward polar residues; it reads FKSNNGSPRQSSGLRDY.

Belongs to the EDC family.

It localises to the cytoplasm. Its function is as follows. mRNA-binding protein which stimulates mRNA decapping. The sequence is that of Enhancer of mRNA-decapping protein 1 (EDC1) from Candida albicans (strain SC5314 / ATCC MYA-2876) (Yeast).